A 111-amino-acid polypeptide reads, in one-letter code: Phosphoribosyl-AMP cyclohydrolase (111 aa).

D80 serves as a coordination point for Mg(2+). C81 contributes to the Zn(2+) binding site. Residues D82 and D84 each contribute to the Mg(2+) site. Residues C97 and C104 each coordinate Zn(2+).

It belongs to the PRA-CH family. In terms of assembly, homodimer. Requires Mg(2+) as cofactor. It depends on Zn(2+) as a cofactor.

The protein localises to the cytoplasm. It catalyses the reaction 1-(5-phospho-beta-D-ribosyl)-5'-AMP + H2O = 1-(5-phospho-beta-D-ribosyl)-5-[(5-phospho-beta-D-ribosylamino)methylideneamino]imidazole-4-carboxamide. It functions in the pathway amino-acid biosynthesis; L-histidine biosynthesis; L-histidine from 5-phospho-alpha-D-ribose 1-diphosphate: step 3/9. Catalyzes the hydrolysis of the adenine ring of phosphoribosyl-AMP. The sequence is that of Phosphoribosyl-AMP cyclohydrolase from Mycobacterium marinum (strain ATCC BAA-535 / M).